Here is a 578-residue protein sequence, read N- to C-terminus: Glucans biosynthesis protein G (578 aa).

The signal sequence occupies residues 1-37 (MIVSPCIAPRIPGTRLRKAMLAGVALVGLLSAGQLWA). The segment at 511–578 (VPVEAPKPAK…TWSYQLPADE (68 aa)) is disordered. Positions 517 to 543 (KPAKDSKQDKAAAKHAHAKAEKAKAEQ) are enriched in basic and acidic residues. Over residues 544–554 (PAEQPAADAAS) the composition is skewed to low complexity.

The protein belongs to the OpgD/OpgG family.

The protein localises to the periplasm. It functions in the pathway glycan metabolism; osmoregulated periplasmic glucan (OPG) biosynthesis. In terms of biological role, involved in the biosynthesis of osmoregulated periplasmic glucans (OPGs). This chain is Glucans biosynthesis protein G, found in Pseudomonas entomophila (strain L48).